The primary structure comprises 317 residues: Lipoyl synthase (317 aa).

The disordered stretch occupies residues 1 to 28; sequence MDSQPQSKKAARGADKTARNPIPIIPAP. [4Fe-4S] cluster-binding residues include cysteine 64, cysteine 69, cysteine 75, cysteine 90, cysteine 94, cysteine 97, and serine 304. Residues 76–293 enclose the Radical SAM core domain; it reads FGGGTATFMI…QRDGMAMGFR (218 aa).

Belongs to the radical SAM superfamily. Lipoyl synthase family. [4Fe-4S] cluster is required as a cofactor.

It localises to the cytoplasm. It catalyses the reaction [[Fe-S] cluster scaffold protein carrying a second [4Fe-4S](2+) cluster] + N(6)-octanoyl-L-lysyl-[protein] + 2 oxidized [2Fe-2S]-[ferredoxin] + 2 S-adenosyl-L-methionine + 4 H(+) = [[Fe-S] cluster scaffold protein] + N(6)-[(R)-dihydrolipoyl]-L-lysyl-[protein] + 4 Fe(3+) + 2 hydrogen sulfide + 2 5'-deoxyadenosine + 2 L-methionine + 2 reduced [2Fe-2S]-[ferredoxin]. It functions in the pathway protein modification; protein lipoylation via endogenous pathway; protein N(6)-(lipoyl)lysine from octanoyl-[acyl-carrier-protein]: step 2/2. Functionally, catalyzes the radical-mediated insertion of two sulfur atoms into the C-6 and C-8 positions of the octanoyl moiety bound to the lipoyl domains of lipoate-dependent enzymes, thereby converting the octanoylated domains into lipoylated derivatives. In Acidithiobacillus ferrooxidans (strain ATCC 23270 / DSM 14882 / CIP 104768 / NCIMB 8455) (Ferrobacillus ferrooxidans (strain ATCC 23270)), this protein is Lipoyl synthase.